A 229-amino-acid chain; its full sequence is Protein FMP52-2, mitochondrial (229 aa).

A mitochondrion-targeting transit peptide spans 1 to 45 (MAAGAFILGSTGLCGYQMLRFAEKSSLFDKISTVGRKLPDFKSEK).

Belongs to the FMP52 family.

Its subcellular location is the mitochondrion outer membrane. In Scheffersomyces stipitis (strain ATCC 58785 / CBS 6054 / NBRC 10063 / NRRL Y-11545) (Yeast), this protein is Protein FMP52-2, mitochondrial (FMP522).